We begin with the raw amino-acid sequence, 223 residues long: Deoxyribose-phosphate aldolase (223 aa).

Residue Asp91 is the Proton donor/acceptor of the active site. Lys153 acts as the Schiff-base intermediate with acetaldehyde in catalysis. Lys182 functions as the Proton donor/acceptor in the catalytic mechanism.

This sequence belongs to the DeoC/FbaB aldolase family. DeoC type 1 subfamily.

The protein resides in the cytoplasm. It carries out the reaction 2-deoxy-D-ribose 5-phosphate = D-glyceraldehyde 3-phosphate + acetaldehyde. It participates in carbohydrate degradation; 2-deoxy-D-ribose 1-phosphate degradation; D-glyceraldehyde 3-phosphate and acetaldehyde from 2-deoxy-alpha-D-ribose 1-phosphate: step 2/2. Its function is as follows. Catalyzes a reversible aldol reaction between acetaldehyde and D-glyceraldehyde 3-phosphate to generate 2-deoxy-D-ribose 5-phosphate. This chain is Deoxyribose-phosphate aldolase, found in Streptococcus pyogenes serotype M2 (strain MGAS10270).